The following is a 603-amino-acid chain: Podocalyxin-like protein 2 (603 aa).

The signal sequence occupies residues 1–28; the sequence is MARPLRAARLPPPLLLLLAAGASLGAYA. Residues 29 to 499 lie on the Extracellular side of the membrane; the sequence is VGVDEPGPEG…ATQVRSDYGT (471 aa). The segment at 53–92 is disordered; the sequence is FEPLDSEEPSEAMGLDAGLAPGSGFPSEDSEESRLLQPPQ. Residue Ser-75 is glycosylated (O-linked (Xyl...) (chondroitin sulfate) serine). Tyr-93 carries the post-translational modification Sulfotyrosine. The N-linked (GlcNAc...) asparagine glycan is linked to Asn-101. Tyr-113 is subject to Sulfotyrosine. Positions 124–368 are disordered; the sequence is SMEDPGQAPD…LEGQAAEAHS (245 aa). Residues 156-187 are compositionally biased toward acidic residues; it reads QEEEEEEEEEEEEREEEEREKEAEEEEEEEEL. Residues 196–216 are compositionally biased toward low complexity; it reads ATAQAHAPSPSTSSSTSSQSP. Polar residues-rich tracts occupy residues 240–266, 302–314, and 339–349; these read VKPT…QESG, ALPS…TVPP, and DTESTPSSATW. N-linked (GlcNAc...) asparagine glycosylation occurs at Asn-260. The N-linked (GlcNAc...) asparagine glycan is linked to Asn-394. The chain crosses the membrane as a helical span at residues 500–520; it reads LFVVLVIIGVICFIIIVLGLL. Topologically, residues 521–603 are cytoplasmic; that stretch reads YNCWQRRMPK…SDVFEEDTHL (83 aa). The segment covering 558–570 has biased composition (polar residues); sequence DSQSEMQEKQPSL. The disordered stretch occupies residues 558-603; the sequence is DSQSEMQEKQPSLNGGAINGPSSWSALMGSKRDPEDSDVFEEDTHL. Ser-569 and Ser-594 each carry phosphoserine. Residues 592-603 show a composition bias toward acidic residues; it reads EDSDVFEEDTHL.

The protein belongs to the podocalyxin family. In terms of assembly, homodimer; disulfide-linked. Interacts with SELL, SELE and SELP. Glycosylated; contains chondroitin sulfate. Displays sialylated O-linked oligosaccharides. In terms of processing, sulfation is necessary for interaction with SELL. Sialylated O-linked oligosaccharides are necessary for interaction with SELL, SELE and SELP.

The protein localises to the membrane. Functionally, acts as a ligand for vascular selectins. Mediates rapid rolling of leukocytes over vascular surfaces through high affinity divalent cation-dependent interactions with E-, P- and L-selectins. This Mus musculus (Mouse) protein is Podocalyxin-like protein 2 (Podxl2).